A 144-amino-acid polypeptide reads, in one-letter code: Transcriptional regulator SlyA (144 aa).

Residues 2 to 135 form the HTH marR-type domain; sequence ESPLGSDLAR…LNKIISKLEK (134 aa). Residues 49–72 constitute a DNA-binding region (H-T-H motif); the sequence is QIQLAKAIGIEQPSLVRTLDQLEE.

The protein belongs to the SlyA family. In terms of assembly, homodimer.

Transcription regulator that can specifically activate or repress expression of target genes. The chain is Transcriptional regulator SlyA from Blochmanniella pennsylvanica (strain BPEN).